The sequence spans 155 residues: Small ribosomal subunit protein uS7cz/uS7cy (155 aa).

Belongs to the universal ribosomal protein uS7 family. Part of the 30S ribosomal subunit.

It is found in the plastid. The protein localises to the chloroplast. In terms of biological role, one of the primary rRNA binding proteins, it binds directly to 16S rRNA where it nucleates assembly of the head domain of the 30S subunit. The polypeptide is Small ribosomal subunit protein uS7cz/uS7cy (rps7-A) (Piper cenocladum (Ant piper)).